We begin with the raw amino-acid sequence, 296 residues long: MANVLCNRARLVTYLPGFYSLVKRVVNPKAFSTAGSSGSDEPHVAATPPDLCPRTVWPDEVMGPFGPQDQRFQLPGNIGFDCHLNGTAAQRKSQASKSLPDILAEPSPNERHEFVMAQYINEFQGSDVPQKQQVNNAETYFENAKVECAVQACPELLRKDFESMFPEVNANHLTVLTVTQKTKNDMTVWSQEVEDEREMLLENFINGAKEICYAICSEGYWADFIDPSSGLAFFGPYTNNTLFETDERYRHFGFSVDDLGCCKVIRHNIWGTHVVVGSIFTNAEPDSPIMRKLSGN.

A mitochondrion-targeting transit peptide spans 1–92; sequence MANVLCNRAR…HLNGTAAQRK (92 aa).

Heterodimer with MMACHC. Forms a multiprotein complex with MMACHC, MTR and MTRR.

It is found in the cytoplasm. Its subcellular location is the mitochondrion. Involved in cobalamin metabolism and trafficking. Plays a role in regulating the biosynthesis and the proportion of two coenzymes, methylcob(III)alamin (MeCbl) and 5'-deoxyadenosylcobalamin (AdoCbl). Promotes oxidation of cob(II)alamin bound to MMACHC. The processing of cobalamin in the cytosol occurs in a multiprotein complex composed of at least MMACHC, MMADHC, MTRR (methionine synthase reductase) and MTR (methionine synthase) which may contribute to shuttle safely and efficiently cobalamin towards MTR in order to produce methionine. This chain is Cobalamin trafficking protein CblD (MMADHC), found in Gallus gallus (Chicken).